Reading from the N-terminus, the 354-residue chain is Ion-translocating oxidoreductase complex subunit D (354 aa).

3 helical membrane passes run 9–28 (IMLH…LYLF), 67–87 (LLSG…WIAV), and 117–137 (VALL…LPLG). FMN phosphoryl threonine is present on T165. The next 5 membrane-spanning stretches (helical) occupy residues 200-220 (GSLG…LLAL), 222-242 (IIHW…AALA), 249-269 (VHGG…ALFI), 277-297 (PISR…VFVI), and 301-321 (GNFP…VPLI).

This sequence belongs to the NqrB/RnfD family. In terms of assembly, the complex is composed of six subunits: RnfA, RnfB, RnfC, RnfD, RnfE and RnfG. Requires FMN as cofactor.

The protein resides in the cell inner membrane. In terms of biological role, part of a membrane-bound complex that couples electron transfer with translocation of ions across the membrane. This Stutzerimonas stutzeri (Pseudomonas stutzeri) protein is Ion-translocating oxidoreductase complex subunit D.